The following is a 105-amino-acid chain: Heat shock protein HspQ (105 aa).

A disordered region spans residues 74–105 (SSELQDERPEQPSMDELAQTIRKQRQAPRLRN). Positions 95–105 (RKQRQAPRLRN) are enriched in basic residues.

Belongs to the HspQ family.

The protein resides in the cytoplasm. Its function is as follows. Involved in the degradation of certain denaturated proteins, including DnaA, during heat shock stress. The chain is Heat shock protein HspQ from Shigella dysenteriae serotype 1 (strain Sd197).